Consider the following 1712-residue polypeptide: U3 small nucleolar RNA-associated protein 10 (1712 aa).

HEAT repeat units lie at residues 164 to 202 (EELVLRILPVLNSCMQAKYGAETVAACYSIVTVLAGRGE), 490 to 528 (TCDFQNLIPYLLHALADPSAPVRRAAAACTVALSEASGS), 564 to 605 (TLLS…PKHG), 987 to 1025 (TQTISRVVPQLAASLRAKHKNFLTGVSDLLLSFTAAFEH), 1236 to 1275 (VISLISFLPSVEKVLQQSQHTDAKIISVGCIDRIVERFGK), 1605 to 1646 (EEVT…DSAA), and 1667 to 1705 (LGLLPEMLPFISELREDDDEMVERETQRWISQVEGVLGE).

This sequence belongs to the HEATR1/UTP10 family. As to quaternary structure, component of the ribosomal small subunit (SSU) processome.

It localises to the nucleus. The protein resides in the nucleolus. Involved in nucleolar processing of pre-18S ribosomal RNA. Involved in ribosome biosynthesis. The polypeptide is U3 small nucleolar RNA-associated protein 10 (Phaeosphaeria nodorum (strain SN15 / ATCC MYA-4574 / FGSC 10173) (Glume blotch fungus)).